The chain runs to 337 residues: Heat-inducible transcription repressor HrcA (337 aa).

It belongs to the HrcA family.

Functionally, negative regulator of class I heat shock genes (grpE-dnaK-dnaJ and groELS operons). Prevents heat-shock induction of these operons. This chain is Heat-inducible transcription repressor HrcA, found in Arthrobacter sp. (strain FB24).